Reading from the N-terminus, the 152-residue chain is Transcriptional repressor NrdR (152 aa).

The segment at 3–34 is a zinc-finger region; sequence CPFCNHGELKVIDSRNAPEANAIKRRRECLNC. Residues 48 to 138 enclose the ATP-cone domain; sequence LQVLKRDGRY…VYRRFKDVGE (91 aa).

It belongs to the NrdR family. It depends on Zn(2+) as a cofactor.

Functionally, negatively regulates transcription of bacterial ribonucleotide reductase nrd genes and operons by binding to NrdR-boxes. The polypeptide is Transcriptional repressor NrdR (Chlamydia abortus (strain DSM 27085 / S26/3) (Chlamydophila abortus)).